We begin with the raw amino-acid sequence, 203 residues long: Endo-type membrane-bound lytic murein transglycosylase A (203 aa).

A signal peptide spans 1–15 (MKLRWFAFLVVLLAG). A lipid anchor (N-palmitoyl cysteine) is attached at cysteine 16. Cysteine 16 is lipidated: S-diacylglycerol cysteine.

Belongs to the transglycosylase Slt family.

Its subcellular location is the cell outer membrane. The enzyme catalyses Endolytic cleavage of the (1-&gt;4)-beta-glycosidic linkage between N-acetylmuramic acid (MurNAc) and N-acetylglucosamine (GlcNAc) residues in peptidoglycan with concomitant formation of a 1,6-anhydrobond in the MurNAc residue.. Its function is as follows. Murein-degrading enzyme. May play a role in recycling of muropeptides during cell elongation and/or cell division. Preferentially cleaves at a distance of more than two disaccharide units from the ends of the glycan chain. This chain is Endo-type membrane-bound lytic murein transglycosylase A, found in Citrobacter koseri (strain ATCC BAA-895 / CDC 4225-83 / SGSC4696).